Consider the following 366-residue polypeptide: Chorismate synthase (366 aa).

Residues arginine 48 and arginine 54 each contribute to the NADP(+) site. Residues 125–127 (RSS), 238–239 (NA), glycine 278, 293–297 (KPTSS), and arginine 319 each bind FMN.

This sequence belongs to the chorismate synthase family. In terms of assembly, homotetramer. FMNH2 serves as cofactor.

It carries out the reaction 5-O-(1-carboxyvinyl)-3-phosphoshikimate = chorismate + phosphate. It functions in the pathway metabolic intermediate biosynthesis; chorismate biosynthesis; chorismate from D-erythrose 4-phosphate and phosphoenolpyruvate: step 7/7. In terms of biological role, catalyzes the anti-1,4-elimination of the C-3 phosphate and the C-6 proR hydrogen from 5-enolpyruvylshikimate-3-phosphate (EPSP) to yield chorismate, which is the branch point compound that serves as the starting substrate for the three terminal pathways of aromatic amino acid biosynthesis. This reaction introduces a second double bond into the aromatic ring system. This chain is Chorismate synthase, found in Burkholderia ambifaria (strain MC40-6).